The primary structure comprises 424 residues: Glutamyl-tRNA reductase (424 aa).

Substrate-binding positions include 49–52 (TCNR), Ser105, 110–112 (EPQ), and Gln116. The active-site Nucleophile is the Cys50. NADP(+) is bound at residue 185–190 (GSGETA).

Belongs to the glutamyl-tRNA reductase family. As to quaternary structure, homodimer.

It catalyses the reaction (S)-4-amino-5-oxopentanoate + tRNA(Glu) + NADP(+) = L-glutamyl-tRNA(Glu) + NADPH + H(+). It participates in porphyrin-containing compound metabolism; protoporphyrin-IX biosynthesis; 5-aminolevulinate from L-glutamyl-tRNA(Glu): step 1/2. Functionally, catalyzes the NADPH-dependent reduction of glutamyl-tRNA(Glu) to glutamate 1-semialdehyde (GSA). This Legionella pneumophila (strain Lens) protein is Glutamyl-tRNA reductase.